Reading from the N-terminus, the 364-residue chain is F-box/LRR-repeat protein At1g55660 (364 aa).

The F-box domain maps to 52-98 (MDKISQLPDELLVKVLSFLSTKDAVSTSILSMRWKSLWMWLPKLEYN). 6 LRR repeats span residues 158–179 (NVRE…LPKS), 185–206 (SIVI…VCLP), 207–228 (SLKT…HRLL), 233–254 (VLED…SVIV), 256–277 (SLQR…KMNS), and 279–300 (SLKY…ESDS).

The polypeptide is F-box/LRR-repeat protein At1g55660 (Arabidopsis thaliana (Mouse-ear cress)).